The following is a 450-amino-acid chain: Glucose-6-phosphate isomerase (450 aa).

Residue glutamate 291 is the Proton donor of the active site. Catalysis depends on residues histidine 312 and lysine 426.

Belongs to the GPI family.

It is found in the cytoplasm. It catalyses the reaction alpha-D-glucose 6-phosphate = beta-D-fructose 6-phosphate. It participates in carbohydrate biosynthesis; gluconeogenesis. The protein operates within carbohydrate degradation; glycolysis; D-glyceraldehyde 3-phosphate and glycerone phosphate from D-glucose: step 2/4. Functionally, catalyzes the reversible isomerization of glucose-6-phosphate to fructose-6-phosphate. This chain is Glucose-6-phosphate isomerase, found in Clostridium botulinum (strain Loch Maree / Type A3).